Here is a 316-residue protein sequence, read N- to C-terminus: Pantothenate kinase (316 aa).

Residue 95–102 coordinates ATP; it reads GSVAVGKS.

Belongs to the prokaryotic pantothenate kinase family.

The protein localises to the cytoplasm. It carries out the reaction (R)-pantothenate + ATP = (R)-4'-phosphopantothenate + ADP + H(+). It functions in the pathway cofactor biosynthesis; coenzyme A biosynthesis; CoA from (R)-pantothenate: step 1/5. This chain is Pantothenate kinase, found in Shewanella pealeana (strain ATCC 700345 / ANG-SQ1).